A 395-amino-acid polypeptide reads, in one-letter code: MAKEKFDRSKPHVNIGTIGHIDHGKTTLTAAITKVLAKHNPKNKFRSFDSIDNAPEEKARGITIAVAHVEYETAKRHYAHVDCPGHADYIKNMITGAAQMDGAIVVVAATDGPMPQTREHILLARQVGVPYIVVAMNKVDMVDDSELLDLVELEVRELLKSYQFPGDDLPVVRVSALGALNGEPQWEKTVDELMEAVDSYIPMPERAIDKPFIMPIEDIFSIQGRGTVVTGRIERGICKVGEEMEIVGFRDTRKTVVTGVEMFKKLLDEGRAGDNVGLLLRGVEKDMVERGQVIAKPGSITPHTKFKGEVYVLSKEEGGRHTPFFKGYRPQFYFRTTDVTGVAQLPEGTEMVMPGDNVSLEVELITPVAMDKGLRFAIREGGRTVGAGTVTEILK.

Residues 10–205 (KPHVNIGTIG…AVDSYIPMPE (196 aa)) form the tr-type G domain. Positions 19-26 (GHIDHGKT) are G1. Residue 19–26 (GHIDHGKT) participates in GTP binding. Thr26 contacts Mg(2+). The tract at residues 61–65 (GITIA) is G2. The segment at 82–85 (DCPG) is G3. Residues 82-86 (DCPGH) and 137-140 (NKVD) each bind GTP. The tract at residues 137–140 (NKVD) is G4. A G5 region spans residues 175–177 (SAL).

The protein belongs to the TRAFAC class translation factor GTPase superfamily. Classic translation factor GTPase family. EF-Tu/EF-1A subfamily. As to quaternary structure, monomer.

The protein localises to the cytoplasm. It carries out the reaction GTP + H2O = GDP + phosphate + H(+). Functionally, GTP hydrolase that promotes the GTP-dependent binding of aminoacyl-tRNA to the A-site of ribosomes during protein biosynthesis. The chain is Elongation factor Tu from Solibacter usitatus (strain Ellin6076).